The chain runs to 1367 residues: Insulin-like growth factor 1 receptor (1367 aa).

Residues 1–30 (MKSGSGGGSPTSLWGLLFLSAALSLWPTSG) form the signal peptide. A disulfide bridge links Cys-33 with Cys-52. Residues Asn-51, Asn-102, and Asn-135 are each glycosylated (N-linked (GlcNAc...) asparagine). 13 cysteine pairs are disulfide-bonded: Cys-150/Cys-178, Cys-182/Cys-205, Cys-192/Cys-211, Cys-215/Cys-224, Cys-219/Cys-230, Cys-231/Cys-239, Cys-235/Cys-248, Cys-251/Cys-260, Cys-264/Cys-276, Cys-282/Cys-303, Cys-307/Cys-321, Cys-324/Cys-328, and Cys-332/Cys-353. N-linked (GlcNAc...) asparagine glycosylation occurs at Asn-244. Asn-314 carries an N-linked (GlcNAc...) asparagine glycan. 2 N-linked (GlcNAc...) asparagine glycosylation sites follow: Asn-417 and Asn-438. Cys-455 and Cys-488 are disulfide-bonded. Fibronectin type-III domains are found at residues 491–609 (DVLH…TNAS), 610–708 (VPSI…TEAE), 735–828 (PERK…TMPA), and 834–927 (IPGP…VQAK). Asn-534, Asn-607, Asn-622, Asn-640, Asn-747, Asn-756, Asn-764, Asn-900, and Asn-913 each carry an N-linked (GlcNAc...) asparagine glycan. Residues 741–935 (DVMQVANTTM…AKTGYENFIH (195 aa)) are Extracellular-facing. A helical membrane pass occupies residues 936–959 (LIIALPVAVLLIVGGLVIMLYVFH). The Cytoplasmic segment spans residues 960–1367 (RKRNNSRLGN…ALPLPQSSTC (408 aa)). The IRS1- and SHC1-binding signature appears at 977–980 (NPEY). Tyr-980 carries the post-translational modification Phosphotyrosine. The Protein kinase domain maps to 999-1274 (ITMSRELGQG…SIKEEMEPGF (276 aa)). Residues 1005–1013 (LGQGSFGMV) and Lys-1033 contribute to the ATP site. Catalysis depends on Asp-1135, which acts as the Proton acceptor. Phosphotyrosine; by autocatalysis occurs at positions 1161, 1165, and 1166. Glycyl lysine isopeptide (Lys-Gly) (interchain with G-Cter in ubiquitin) cross-links involve residues Lys-1168 and Lys-1171. Ser-1278 carries the phosphoserine; by GSK3-beta modification. Ser-1282 is modified (phosphoserine). Residues 1288 to 1367 (PEPEELDLEP…ALPLPQSSTC (80 aa)) form a disordered region. The span at 1290–1299 (PEELDLEPEN) shows a compositional bias: acidic residues. Over residues 1300 to 1316 (MESVPLDPSASSSSLPL) the composition is skewed to low complexity. Over residues 1317–1326 (PDRHSGHKAE) the composition is skewed to basic and acidic residues.

The protein belongs to the protein kinase superfamily. Tyr protein kinase family. Insulin receptor subfamily. Tetramer of 2 alpha and 2 beta chains linked by disulfide bonds. The alpha chains contribute to the formation of the ligand-binding domain, while the beta chain carries the kinase domain. Interacts with PIK3R1 and with the PTB/PID domains of IRS1 and SHC1 in vitro when autophosphorylated on tyrosine residues. Forms a hybrid receptor with INSR, the hybrid is a tetramer consisting of 1 alpha chain and 1 beta chain of INSR and 1 alpha chain and 1 beta chain of IGF1R. Interacts with ARRB1 and ARRB2. Interacts with GRB10. Interacts with RACK1. Interacts with SOCS1, SOCS2 and SOCS3. Interacts with 14-3-3 proteins. Interacts with NMD2. Interacts with MAP3K5. Interacts with STAT3. Found in a ternary complex with IGF1 and ITGAV:ITGB3 or ITGA6:ITGB4. Interacts (nascent precursor form) with ZFAND2B. As to quaternary structure, (Microbial infection) Interacts with human respiratory syncytial virus (HRSV) fusion glycoprotein F1/F2 heterodimer. Post-translationally, autophosphorylated on tyrosine residues in response to ligand binding. Autophosphorylation occurs in trans, i.e. one subunit of the dimeric receptor phosphorylates tyrosine residues on the other subunit. Autophosphorylation occurs in a sequential manner; Tyr-1165 is predominantly phosphorylated first, followed by phosphorylation of Tyr-1161 and Tyr-1166. While every single phosphorylation increases kinase activity, all three tyrosine residues in the kinase activation loop (Tyr-1165, Tyr-1161 and Tyr-1166) have to be phosphorylated for optimal activity. Can be autophosphorylated at additional tyrosine residues (in vitro). Autophosphorylated is followed by phosphorylation of juxtamembrane tyrosines and C-terminal serines. May also be phosphorylated at Tyr-1161 and Tyr-1166 by mTORC2. Phosphorylation of Tyr-980 is required for IRS1- and SHC1-binding. Phosphorylation of Ser-1278 by GSK-3beta restrains kinase activity and promotes cell surface expression, it requires a priming phosphorylation at Ser-1282. Dephosphorylated by PTPN1. In terms of processing, polyubiquitinated at Lys-1168 and Lys-1171 through both 'Lys-48' and 'Lys-29' linkages, promoting receptor endocytosis and subsequent degradation by the proteasome. Ubiquitination is facilitated by pre-existing phosphorylation. Sumoylated with SUMO1. Post-translationally, controlled by regulated intramembrane proteolysis (RIP). Undergoes metalloprotease-dependent constitutive ectodomain shedding to produce a membrane-anchored 52 kDa C-Terminal fragment which is further processed by presenilin gamma-secretase to yield an intracellular 50 kDa fragment. Found as a hybrid receptor with INSR in muscle, heart, kidney, adipose tissue, skeletal muscle, hepatoma, fibroblasts, spleen and placenta (at protein level). Expressed in a variety of tissues. Overexpressed in tumors, including melanomas, cancers of the colon, pancreas prostate and kidney.

The protein localises to the cell membrane. It carries out the reaction L-tyrosyl-[protein] + ATP = O-phospho-L-tyrosyl-[protein] + ADP + H(+). Its activity is regulated as follows. Activated by autophosphorylation at Tyr-1165, Tyr-1161 and Tyr-1166 on the kinase activation loop; phosphorylation at all three tyrosine residues is required for optimal kinase activity. Inhibited by MSC1609119A-1, BMS-754807, PQIP, benzimidazole pyridinone, isoquinolinedione, bis-azaindole, 3-cyanoquinoline, 2,4-bis-arylamino-1,3-pyrimidine, pyrrolopyrimidine, pyrrole-5-carboxaldehyde, picropodophyllin (PPP), tyrphostin derivatives. While most inhibitors bind to the ATP binding pocket, MSC1609119A-1 functions as allosteric inhibitor and binds close to the DFG motif and the activation loop. Receptor tyrosine kinase which mediates actions of insulin-like growth factor 1 (IGF1). Binds IGF1 with high affinity and IGF2 and insulin (INS) with a lower affinity. The activated IGF1R is involved in cell growth and survival control. IGF1R is crucial for tumor transformation and survival of malignant cell. Ligand binding activates the receptor kinase, leading to receptor autophosphorylation, and tyrosines phosphorylation of multiple substrates, that function as signaling adapter proteins including, the insulin-receptor substrates (IRS1/2), Shc and 14-3-3 proteins. Phosphorylation of IRSs proteins lead to the activation of two main signaling pathways: the PI3K-AKT/PKB pathway and the Ras-MAPK pathway. The result of activating the MAPK pathway is increased cellular proliferation, whereas activating the PI3K pathway inhibits apoptosis and stimulates protein synthesis. Phosphorylated IRS1 can activate the 85 kDa regulatory subunit of PI3K (PIK3R1), leading to activation of several downstream substrates, including protein AKT/PKB. AKT phosphorylation, in turn, enhances protein synthesis through mTOR activation and triggers the antiapoptotic effects of IGFIR through phosphorylation and inactivation of BAD. In parallel to PI3K-driven signaling, recruitment of Grb2/SOS by phosphorylated IRS1 or Shc leads to recruitment of Ras and activation of the ras-MAPK pathway. In addition to these two main signaling pathways IGF1R signals also through the Janus kinase/signal transducer and activator of transcription pathway (JAK/STAT). Phosphorylation of JAK proteins can lead to phosphorylation/activation of signal transducers and activators of transcription (STAT) proteins. In particular activation of STAT3, may be essential for the transforming activity of IGF1R. The JAK/STAT pathway activates gene transcription and may be responsible for the transforming activity. JNK kinases can also be activated by the IGF1R. IGF1 exerts inhibiting activities on JNK activation via phosphorylation and inhibition of MAP3K5/ASK1, which is able to directly associate with the IGF1R. In terms of biological role, when present in a hybrid receptor with INSR, binds IGF1. PubMed:12138094 shows that hybrid receptors composed of IGF1R and INSR isoform Long are activated with a high affinity by IGF1, with low affinity by IGF2 and not significantly activated by insulin, and that hybrid receptors composed of IGF1R and INSR isoform Short are activated by IGF1, IGF2 and insulin. In contrast, PubMed:16831875 shows that hybrid receptors composed of IGF1R and INSR isoform Long and hybrid receptors composed of IGF1R and INSR isoform Short have similar binding characteristics, both bind IGF1 and have a low affinity for insulin. The protein is Insulin-like growth factor 1 receptor (IGF1R) of Homo sapiens (Human).